The primary structure comprises 741 residues: NAD(P)H-quinone oxidoreductase subunit 5, chloroplastic (741 aa).

A run of 16 helical transmembrane segments spans residues 9–29 (WVIPLLPLPVIMSMGFGLFFI), 39–59 (IWAFPSVLFLSIAMVFSIQLS), 89–109 (IDPLTSIMLILITTVGILVLI), 125–145 (FVYISFFTTSMLGLVTSSNLI), 147–167 (IYFFWELVGMCSYLLIGFWFT), 185–205 (GDFGLLLGILGFFWITGSLEF), 219–239 (NGINSLLTTLCAFLLFLGAVA), 258–278 (TPISALIHAATMVAAGIFLLA), 280–300 (LFPLFISLPLIMTLISLVGTI), 327–347 (LGYMMLALGIGSYQAALFHLI), 354–374 (ALLFLGSGSIIHSMEPLVGYS), 396–416 (TTFLWGTLSLCGIPPLACFWS), 425–445 (WLYSPFFGIIASFTAGLTAFY), 542–562 (LFPLLILLLFTLFIGFIGISF), 605–625 (AISSVSLAIFGLFIAYILYGS), and 721–741 (ISSYLFFFLCYVSVFLFFFIS).

It belongs to the complex I subunit 5 family. NDH is composed of at least 16 different subunits, 5 of which are encoded in the nucleus.

It localises to the plastid. The protein localises to the chloroplast thylakoid membrane. It carries out the reaction a plastoquinone + NADH + (n+1) H(+)(in) = a plastoquinol + NAD(+) + n H(+)(out). The catalysed reaction is a plastoquinone + NADPH + (n+1) H(+)(in) = a plastoquinol + NADP(+) + n H(+)(out). Its function is as follows. NDH shuttles electrons from NAD(P)H:plastoquinone, via FMN and iron-sulfur (Fe-S) centers, to quinones in the photosynthetic chain and possibly in a chloroplast respiratory chain. The immediate electron acceptor for the enzyme in this species is believed to be plastoquinone. Couples the redox reaction to proton translocation, and thus conserves the redox energy in a proton gradient. The protein is NAD(P)H-quinone oxidoreductase subunit 5, chloroplastic (ndhF) of Lolium perenne (Perennial ryegrass).